The sequence spans 278 residues: Tryptophan synthase alpha chain (278 aa).

Residues glutamate 50 and aspartate 61 each act as proton acceptor in the active site.

The protein belongs to the TrpA family. As to quaternary structure, tetramer of two alpha and two beta chains.

It catalyses the reaction (1S,2R)-1-C-(indol-3-yl)glycerol 3-phosphate + L-serine = D-glyceraldehyde 3-phosphate + L-tryptophan + H2O. The protein operates within amino-acid biosynthesis; L-tryptophan biosynthesis; L-tryptophan from chorismate: step 5/5. Its function is as follows. The alpha subunit is responsible for the aldol cleavage of indoleglycerol phosphate to indole and glyceraldehyde 3-phosphate. In Nitrobacter winogradskyi (strain ATCC 25391 / DSM 10237 / CIP 104748 / NCIMB 11846 / Nb-255), this protein is Tryptophan synthase alpha chain.